Consider the following 239-residue polypeptide: Purine nucleoside phosphorylase DeoD-type (239 aa).

A purine D-ribonucleoside is bound at residue His-5. Phosphate is bound by residues Gly-21, Arg-25, Arg-44, and 88–91; that span reads RVGS. A purine D-ribonucleoside is bound by residues 180-182 and 204-205; these read EME and SD. Asp-205 acts as the Proton donor in catalysis.

This sequence belongs to the PNP/UDP phosphorylase family. Homohexamer; trimer of homodimers.

The enzyme catalyses a purine D-ribonucleoside + phosphate = a purine nucleobase + alpha-D-ribose 1-phosphate. It catalyses the reaction a purine 2'-deoxy-D-ribonucleoside + phosphate = a purine nucleobase + 2-deoxy-alpha-D-ribose 1-phosphate. Catalyzes the reversible phosphorolytic breakdown of the N-glycosidic bond in the beta-(deoxy)ribonucleoside molecules, with the formation of the corresponding free purine bases and pentose-1-phosphate. In Cronobacter sakazakii (strain ATCC BAA-894) (Enterobacter sakazakii), this protein is Purine nucleoside phosphorylase DeoD-type.